Consider the following 418-residue polypeptide: Glutamyl-tRNA(Gln) amidotransferase subunit D (418 aa).

Residues 81–407 enclose the Asparaginase/glutaminase domain; that stretch reads PDVKIISTGG…EEAKEMVKKS (327 aa). Catalysis depends on residues T91, T166, D167, and K243.

It belongs to the asparaginase 1 family. GatD subfamily. Heterodimer of GatD and GatE.

It catalyses the reaction L-glutamyl-tRNA(Gln) + L-glutamine + ATP + H2O = L-glutaminyl-tRNA(Gln) + L-glutamate + ADP + phosphate + H(+). Allows the formation of correctly charged Gln-tRNA(Gln) through the transamidation of misacylated Glu-tRNA(Gln) in organisms which lack glutaminyl-tRNA synthetase. The reaction takes place in the presence of glutamine and ATP through an activated gamma-phospho-Glu-tRNA(Gln). The GatDE system is specific for glutamate and does not act on aspartate. The polypeptide is Glutamyl-tRNA(Gln) amidotransferase subunit D (Archaeoglobus fulgidus (strain ATCC 49558 / DSM 4304 / JCM 9628 / NBRC 100126 / VC-16)).